We begin with the raw amino-acid sequence, 749 residues long: Cytosolic phospholipase A2 (749 aa).

The tract at residues 1–178 is phospholipid binding; it reads MSFIDPYQHI…MKKLLGPKKS (178 aa). Ser2 is subject to Phosphoserine. A C2 domain is found at 6–122; sequence PYQHIIVEHQ…KVGEKKEVPF (117 aa). Ca(2+)-binding residues include Asp40, Thr41, Asp43, Asn65, Asp93, Ala94, and Asn95. In terms of domain architecture, PLA2c spans 140 to 740; it reads SCPDLRFSMA…SNVEARRFFN (601 aa). Ser228 functions as the Nucleophile in the catalytic mechanism. Thr268 is subject to Phosphothreonine. Residues 427–456 form a disordered region; the sequence is KHIVSNDSSDSDDESQEPKGTENEDAERDY. Phosphoserine occurs at positions 434, 435, and 437. Residue Ser505 is modified to Phosphoserine; by MAPK. Ser515 is modified (phosphoserine). Lys541 participates in a covalent cross-link: Glycyl lysine isopeptide (Lys-Gly) (interchain with G-Cter in SUMO2). The Proton acceptor role is filled by Asp549. Lys606 is covalently cross-linked (Glycyl lysine isopeptide (Lys-Gly) (interchain with G-Cter in SUMO2)). Residues Ser727 and Ser729 each carry the phosphoserine modification.

In terms of assembly, interacts with KAT5. In terms of processing, phosphorylated at both Ser-505 and Ser-727 in response to mitogenic stimuli.

The protein resides in the cytoplasm. Its subcellular location is the golgi apparatus membrane. It is found in the nucleus envelope. The enzyme catalyses a 1,2-diacyl-sn-glycero-3-phosphocholine + H2O = a 1-acyl-sn-glycero-3-phosphocholine + a fatty acid + H(+). The catalysed reaction is a 1-O-alkyl-2-acyl-sn-glycero-3-phosphocholine + H2O = a 1-O-alkyl-sn-glycero-3-phosphocholine + a fatty acid + H(+). It catalyses the reaction a 1-acyl-sn-glycero-3-phosphocholine + H2O = sn-glycerol 3-phosphocholine + a fatty acid + H(+). It carries out the reaction 1-hexadecanoyl-2-(5Z,8Z,11Z,14Z-eicosatetraenoyl)-sn-glycero-3-phosphocholine + H2O = 1-hexadecanoyl-sn-glycero-3-phosphocholine + (5Z,8Z,11Z,14Z)-eicosatetraenoate + H(+). The enzyme catalyses 1,2-di-(5Z,8Z,11Z,14Z-eicosatetraenoyl)-sn-glycero-3-phosphocholine + H2O = 1-(5Z,8Z,11Z,14Z-eicosatetraenoyl)-sn-glycero-3-phosphocholine + (5Z,8Z,11Z,14Z)-eicosatetraenoate + H(+). The catalysed reaction is 1-octadecanoyl-2-(5Z,8Z,11Z,14Z-eicosatetraenoyl)-sn-glycero-3-phosphocholine + H2O = 1-octadecanoyl-sn-glycero-3-phosphocholine + (5Z,8Z,11Z,14Z)-eicosatetraenoate + H(+). It catalyses the reaction 1-hexadecanoyl-2-(9Z,12Z-octadecadienoyl)-sn-glycero-3-phosphocholine + H2O = (9Z,12Z)-octadecadienoate + 1-hexadecanoyl-sn-glycero-3-phosphocholine + H(+). It carries out the reaction 1-octadecanoyl-2-(9Z,12Z,15Z-octadecatrienoyl)-sn-glycero-3-phosphocholine + H2O = (9Z,12Z,15Z)-octadecatrienoate + 1-octadecanoyl-sn-glycero-3-phosphocholine + H(+). The enzyme catalyses 1-(5Z,8Z,11Z,14Z-eicosatetraenoyl)-2-hexadecanoyl-sn-glycero-3-phosphocholine + H2O = 1-(5Z,8Z,11Z,14Z-eicosatetraenoyl)-sn-glycero-3-phosphocholine + hexadecanoate + H(+). The catalysed reaction is 1-O-hexadecyl-2-(5Z,8Z,11Z,14Z)-eicosatetraenoyl-sn-glycero-3-phosphocholine + H2O = 1-O-hexadecyl-sn-glycero-3-phosphocholine + (5Z,8Z,11Z,14Z)-eicosatetraenoate + H(+). It catalyses the reaction 1,2-di-(9Z-octadecenoyl)-sn-glycero-3-phospho-(1'-sn-glycerol) + H2O = 1-(9Z-octadecenoyl)-sn-glycero-3-phospho-(1'-sn-glycerol) + (9Z)-octadecenoate + H(+). It carries out the reaction 1-octadecanoyl-2-(5Z,8Z,11Z,14Z-eicosatetraenoyl)-sn-glycero-3-phosphate + H2O = 1-octadecanoyl-sn-glycero-3-phosphate + (5Z,8Z,11Z,14Z)-eicosatetraenoate + H(+). The enzyme catalyses 1-hexadecanoyl-sn-glycero-3-phosphocholine + H2O = sn-glycerol 3-phosphocholine + hexadecanoate + H(+). The catalysed reaction is 2-(prostaglandin E2)-sn-glycero-3-phosphoethanolamine + H2O = sn-glycero-3-phosphoethanolamine + prostaglandin E2 + H(+). It catalyses the reaction 2-[(15S)-hydroxy-(5Z,8Z,11Z,13E)-eicosatetraenoyl]-sn-glycero-3-phosphocholine + H2O = (15S)-hydroxy-(5Z,8Z,11Z,13E)-eicosatetraenoate + sn-glycerol 3-phosphocholine + H(+). It carries out the reaction 2-[(15R)-hydroxy-(5Z,8Z,11Z,13E)-eicosatetraenoyl]-sn-glycero-3-phosphocholine + H2O = (15R)-hydroxy-(5Z,8Z,11Z,13E)-eicosatetraenoate + sn-glycerol 3-phosphocholine + H(+). The enzyme catalyses 2-(prostaglandin E2)-sn-glycero-3-phosphocholine + H2O = prostaglandin E2 + sn-glycerol 3-phosphocholine + H(+). The catalysed reaction is 2-[(11R)-hydroxy-(5Z,8Z,12E,14Z)-eicosatetraenoyl]-sn-glycero-3-phosphocholine + H2O = (11R)-hydroxy-(5Z,8Z,12E,14Z)-eicosatetraenoate + sn-glycerol 3-phosphocholine + H(+). It catalyses the reaction 1-(5Z,8Z,11Z,14Z-eicosatetraenoyl)-2-O-hexadecyl-sn-glycero-3-phosphocholine + H2O = 2-O-hexadecyl-sn-glycero-3-phosphocholine + (5Z,8Z,11Z,14Z)-eicosatetraenoate + H(+). It carries out the reaction 1-octadecanoyl-2-(5Z,8Z,11Z,14Z-eicosatetraenoyl)-sn-glycero-3-phosphocholine + glycerol = 1-(5Z,8Z,11Z,14Z-eicosatetraenoyl)-glycerol + 1-octadecanoyl-sn-glycero-3-phosphocholine. The enzyme catalyses 1-octadecanoyl-2-(9Z,12Z,15Z-octadecatrienoyl)-sn-glycero-3-phosphocholine + glycerol = 1-(9Z,12Z,15Z-octadecatrienoyl)-glycerol + 1-octadecanoyl-sn-glycero-3-phosphocholine. It participates in membrane lipid metabolism; glycerophospholipid metabolism. The protein operates within lipid metabolism; arachidonate metabolism. It functions in the pathway lipid metabolism; prostaglandin biosynthesis. Its pathway is lipid metabolism; leukotriene B4 biosynthesis. With respect to regulation, activated by cytosolic calcium, which is necessary for binding to membrane lipids. Activated by phosphorylation in response to mitogenic stimuli. In terms of biological role, has primarily calcium-dependent phospholipase and lysophospholipase activities, with a major role in membrane lipid remodeling and biosynthesis of lipid mediators of the inflammatory response. Plays an important role in embryo implantation and parturition through its ability to trigger prostanoid production. Preferentially hydrolyzes the ester bond of the fatty acyl group attached at sn-2 position of phospholipids (phospholipase A2 activity). Selectively hydrolyzes sn-2 arachidonoyl group from membrane phospholipids, providing the precursor for eicosanoid biosynthesis via the cyclooxygenase pathway. In an alternative pathway of eicosanoid biosynthesis, hydrolyzes sn-2 fatty acyl chain of eicosanoid lysophopholipids to release free bioactive eicosanoids. Hydrolyzes the ester bond of the fatty acyl group attached at sn-1 position of phospholipids (phospholipase A1 activity) only if an ether linkage rather than an ester linkage is present at the sn-2 position. This hydrolysis is not stereospecific. Has calcium-independent phospholipase A2 and lysophospholipase activities in the presence of phosphoinositides. Has O-acyltransferase activity. Catalyzes the transfer of fatty acyl chains from phospholipids to a primary hydroxyl group of glycerol (sn-1 or sn-3), potentially contributing to monoacylglycerol synthesis. This Equus caballus (Horse) protein is Cytosolic phospholipase A2 (PLA2G4A).